Consider the following 291-residue polypeptide: Meteorin (291 aa).

Residues 1-21 (MLVAALLCALCCGLLAASARA) form the signal peptide. Intrachain disulfides connect cysteine 28–cysteine 49, cysteine 80–cysteine 116, cysteine 169–cysteine 240, cysteine 172–cysteine 264, and cysteine 182–cysteine 286.

The protein belongs to the meteorin family. Monomer.

It localises to the secreted. Its function is as follows. Involved in both glial cell differentiation and axonal network formation during neurogenesis. Promotes astrocyte differentiation and transforms cerebellar astrocytes into radial glia. Also induces axonal extension in small and intermediate neurons of sensory ganglia by activating nearby satellite glia. This is Meteorin (Metrn) from Rattus norvegicus (Rat).